A 292-amino-acid chain; its full sequence is tRNA pseudouridine synthase B (292 aa).

The active-site Nucleophile is Asp40.

Belongs to the pseudouridine synthase TruB family. Type 1 subfamily.

The enzyme catalyses uridine(55) in tRNA = pseudouridine(55) in tRNA. Functionally, responsible for synthesis of pseudouridine from uracil-55 in the psi GC loop of transfer RNAs. The chain is tRNA pseudouridine synthase B from Mycoplasma capricolum subsp. capricolum (strain California kid / ATCC 27343 / NCTC 10154).